Here is a 324-residue protein sequence, read N- to C-terminus: Putative divalent cation/proton antiporter TMEM165 (324 aa).

The first 33 residues, 1–33 (MAAAAPGNGRASAPRLLLLFLVPLLWAPAAVRA), serve as a signal peptide directing secretion. Residues 34 to 89 (GPDEDLSHRNKEPPAPAQQLQPQPVAVQGPEPARVEKIFTPAAPVHTNKEDPATQT) lie on the Lumenal side of the membrane. The segment covering 35–45 (PDEDLSHRNKE) has biased composition (basic and acidic residues). Residues 35-59 (PDEDLSHRNKEPPAPAQQLQPQPVA) form a disordered region. The span at 50–59 (AQQLQPQPVA) shows a compositional bias: low complexity. A helical transmembrane segment spans residues 90 to 110 (NLGFIHAFVAAISVIIVSELG). Topologically, residues 111 to 126 (DKTFFIAAIMAMRYNR) are cytoplasmic. A helical membrane pass occupies residues 127-147 (LTVLAGAMLALGLMTCLSVLF). Topologically, residues 148–151 (GYAT) are lumenal. Residues 152–172 (TVIPRVYTYYVSTVLFAIFGI) traverse the membrane as a helical segment. The Cytoplasmic segment spans residues 173–228 (RMLREGLKMSPDEGQEELEEVQAELKKKDEEFQRTKLLNGPGDVETGTSITVPQKK). Residues 184–211 (DEGQEELEEVQAELKKKDEEFQRTKLLN) are a coiled coil. A helical transmembrane segment spans residues 229–249 (WLHFISPIFVQALTLTFLAEW). Residues 250–267 (GDRSQLTTIVLAAREDPY) are Lumenal-facing. The helical transmembrane segment at 268–288 (GVAVGGTVGHCLCTGLAVIGG) threads the bilayer. At 289 to 299 (RMIAQKISVRT) the chain is on the cytoplasmic side. A helical membrane pass occupies residues 300–320 (VTIIGGIVFLAFAFSALFISP). Residues 321–324 (DSGF) are Lumenal-facing.

The protein belongs to the GDT1 family. In terms of tissue distribution, ubiquitously expressed.

It localises to the golgi apparatus membrane. The catalysed reaction is Ca(2+)(in) + n H(+)(out) = Ca(2+)(out) + n H(+)(in). The enzyme catalyses Mn(2+)(in) + n H(+)(out) = Mn(2+)(out) + n H(+)(in). Functionally, putative divalent cation:proton antiporter that exchanges calcium or manganese ions for protons across the Golgi membrane. Mediates the reversible transport of calcium or manganese to the Golgi lumen driven by the proton gradient and possibly the membrane potential generated by V-ATPase. Provides calcium or manganese cofactors to resident Golgi enzymes and contributes to the maintenance of an acidic luminal Golgi pH required for proper functioning of the secretory pathway. Promotes Ca(2+) storage within the Golgi lumen of the mammary epithelial cells to be then secreted into milk. The transport mechanism and stoichiometry remains to be elucidated. This chain is Putative divalent cation/proton antiporter TMEM165, found in Homo sapiens (Human).